Consider the following 403-residue polypeptide: MSQFDRIHLVVLDSVGIGAAPDANDFVNAGVPDGASDTLGHISKTVGLAVPNMAKIGLGNIPRPQALKTVPAEENPSGYATKLQEVSLGKDTMTGHWEIMGLNITEPFDTFWNGFPEDIITKIEDFSGRKVIREANKPYSGTAVIDDFGPRQMETGELIIYTSADPVLQIAAHEDIIPLEELYRICEYARSITMERPALLGRIIARPYVGEPGNFTRTANRHDYAVSPFEDTVLNKLDQAGIDTYAVGKINDIFNGSGINHDMGHNKSNSHGIDTLIKTMGLSEFEKGFSFTNLVDFDALYGHRRDPHGYRDCLHEFDERLPEIISAMRDKDLLLITADHGNDPTYAGTDHTREYIPLLAYSPSFTGNGLIPVGHFADISATVADNFGVDTAMIGESFLQDLV.

Mn(2+) contacts are provided by D13, D298, H303, D339, H340, and H351.

Belongs to the phosphopentomutase family. It depends on Mn(2+) as a cofactor.

It localises to the cytoplasm. It carries out the reaction 2-deoxy-alpha-D-ribose 1-phosphate = 2-deoxy-D-ribose 5-phosphate. The enzyme catalyses alpha-D-ribose 1-phosphate = D-ribose 5-phosphate. It participates in carbohydrate degradation; 2-deoxy-D-ribose 1-phosphate degradation; D-glyceraldehyde 3-phosphate and acetaldehyde from 2-deoxy-alpha-D-ribose 1-phosphate: step 1/2. Its function is as follows. Isomerase that catalyzes the conversion of deoxy-ribose 1-phosphate (dRib-1-P) and ribose 1-phosphate (Rib-1-P) to deoxy-ribose 5-phosphate (dRib-5-P) and ribose 5-phosphate (Rib-5-P), respectively. This chain is Phosphopentomutase 2, found in Streptococcus agalactiae serotype Ia (strain ATCC 27591 / A909 / CDC SS700).